The following is a 5148-amino-acid chain: E3 ubiquitin-protein ligase RNF213 (5148 aa).

Residues 38 to 48 are compositionally biased toward polar residues; that stretch reads DNTLVVSSTPE. A disordered region spans residues 38–341; the sequence is DNTLVVSSTP…QAAAPEPTSA (304 aa). Basic and acidic residues predominate over residues 69–78; sequence PGKELEKPEE. Residues 101–113 are compositionally biased toward polar residues; the sequence is GTISSSEAPSSGL. The span at 130–146 shows a compositional bias: low complexity; that stretch reads PQNQAQQGGAASQPGHP. A Phosphoserine modification is found at S196. Composition is skewed to basic and acidic residues over residues 233–245, 257–267, and 279–289; these read SKGETSGQEKKVP, AGKETGEDVRK, and KHGDQEAELKG. The span at 319-335 shows a compositional bias: low complexity; the sequence is AAAVKTQQAAAPQQAAA. Residue K1128 forms a Glycyl lysine isopeptide (Lys-Gly) (interchain with G-Cter in SUMO2) linkage. Residues 1957–1962, E2060, A2114, D2116, and R2177 contribute to the ATP site; that span reads GVGKSL. Phosphoserine is present on S2234. Positions 2460 and 2535 each coordinate ATP. The stretch at 3435-3465 forms a coiled coil; it reads EEMEIETSQSKELAEEQMEVEDSEEMKKASD. C3947, C3950, C3962, H3964, C3967, C3970, C3982, C3985, C4451, and H4455 together coordinate Zn(2+). An RING-type zinc finger spans residues 3947-3986; it reads CFICHGDAQDPVCLPCDHVYCLRCIQTWLIPGQMMCPYCL. The RZ-type zinc finger occupies 4429-4501; the sequence is MPEDLLVHAR…IRNNEDRTQT (73 aa). C4462 (nucleophile; for E3 ubiquitin-lipopolysaccharide ligase activity) is an active-site residue. 2 residues coordinate Zn(2+): C4471 and C4474.

The protein belongs to the AAA ATPase family. As to quaternary structure, monomer. Interacts with UBE2L3/UBCH7; UBE2L3/UBCH7 is the most efficient ubiquitin-conjugating enzyme E2 for the ubiquitin ligase activity. Interacts with UBE2N/UBC13; promoting 'Lys-63'-linked ubiquitination of target proteins.

It localises to the cytoplasm. The protein localises to the cytosol. Its subcellular location is the lipid droplet. The catalysed reaction is S-ubiquitinyl-[E2 ubiquitin-conjugating enzyme]-L-cysteine + [acceptor protein]-L-lysine = [E2 ubiquitin-conjugating enzyme]-L-cysteine + N(6)-ubiquitinyl-[acceptor protein]-L-lysine.. The enzyme catalyses ATP + H2O = ADP + phosphate + H(+). The protein operates within protein modification; protein ubiquitination. Its function is as follows. Atypical E3 ubiquitin ligase that can catalyze ubiquitination of both proteins and lipids, and which is involved in various processes, such as lipid metabolism, angiogenesis and cell-autonomous immunity. Acts as a key immune sensor by catalyzing ubiquitination of the lipid A moiety of bacterial lipopolysaccharide (LPS) via its RZ-type zinc-finger: restricts the proliferation of cytosolic bacteria, such as Salmonella, by generating the bacterial ubiquitin coat through the ubiquitination of LPS. Also acts indirectly by mediating the recruitment of the LUBAC complex, which conjugates linear polyubiquitin chains. Ubiquitination of LPS triggers cell-autonomous immunity, such as antibacterial autophagy, leading to degradation of the microbial invader. Involved in lipid metabolism by regulating fat storage and lipid droplet formation; act by inhibiting the lipolytic process. Also regulates lipotoxicity by inhibiting desaturation of fatty acids. Also acts as an E3 ubiquitin-protein ligase via its RING-type zinc finger: mediates 'Lys-63'-linked ubiquitination of target proteins. Involved in the non-canonical Wnt signaling pathway in vascular development: acts by mediating ubiquitination and degradation of FLNA and NFATC2 downstream of RSPO3, leading to inhibit the non-canonical Wnt signaling pathway and promoting vessel regression. Also has ATPase activity; ATPase activity is required for ubiquitination of LPS. The sequence is that of E3 ubiquitin-protein ligase RNF213 from Mus musculus (Mouse).